We begin with the raw amino-acid sequence, 194 residues long: Lytic chitin monooxygenase (194 aa).

Positions 1–28 (MKKSLLTIVLAFSFVLGGAALAPTVSEA) are cleaved as a signal peptide. Cu cation is bound by residues histidine 29 and histidine 114. The Chitin-binding type-4 domain maps to 29 to 191 (HGYVASPGSR…VNAFYQAIDV (163 aa)).

Cu(2+) is required as a cofactor.

It is found in the secreted. The enzyme catalyses [(1-&gt;4)-N-acetyl-beta-D-glucosaminyl]n+m + reduced acceptor + O2 = [(1-&gt;4)-N-acetyl-beta-D-glucosaminyl]m-1-(1-&gt;4)-2-(acetylamino)-2-deoxy-D-glucono-1,5-lactone + [(1-&gt;4)-N-acetyl-beta-D-glucosaminyl]n + acceptor + H2O.. It participates in glycan degradation; chitin degradation. Involved in chitin degradation. Catalyzes the oxidative cleavage of glycosidic bonds in both alpha- and beta-chitin via a copper-dependent mechanism, leading to oxidized chitooligosaccharides with a dominance of even-numbered products. Acts synergistically with the chitinase EfChi18A, and combining the two enzymes leads to rapid and complete depolymerization of crystalline chitin, especially with beta-chitin as a substrate. Is likely involved in a chitin degradation pathway that allows E.faecalis V583 to grow on chitin as a carbon source. This chain is Lytic chitin monooxygenase, found in Enterococcus faecalis (strain ATCC 700802 / V583).